Consider the following 538-residue polypeptide: Phosphoenolpyruvate carboxykinase (ATP) (538 aa).

The substrate site is built by arginine 64, tyrosine 205, and lysine 211. ATP-binding positions include lysine 211, histidine 230, and 246–254; that span reads GLSGTGKTT. Mn(2+) contacts are provided by lysine 211 and histidine 230. Aspartate 267 provides a ligand contact to Mn(2+). Residues glutamate 295, arginine 331, 447–448, and threonine 453 each bind ATP; that span reads RI. Arginine 331 provides a ligand contact to substrate.

Belongs to the phosphoenolpyruvate carboxykinase (ATP) family. In terms of assembly, monomer. It depends on Mn(2+) as a cofactor.

The protein localises to the cytoplasm. It carries out the reaction oxaloacetate + ATP = phosphoenolpyruvate + ADP + CO2. Its pathway is carbohydrate biosynthesis; gluconeogenesis. Functionally, involved in the gluconeogenesis. Catalyzes the conversion of oxaloacetate (OAA) to phosphoenolpyruvate (PEP) through direct phosphoryl transfer between the nucleoside triphosphate and OAA. This is Phosphoenolpyruvate carboxykinase (ATP) from Mannheimia succiniciproducens (strain KCTC 0769BP / MBEL55E).